The chain runs to 351 residues: Protein RecA (351 aa).

Residue 73–80 (GPESSGKT) participates in ATP binding.

This sequence belongs to the RecA family.

The protein resides in the cytoplasm. In terms of biological role, can catalyze the hydrolysis of ATP in the presence of single-stranded DNA, the ATP-dependent uptake of single-stranded DNA by duplex DNA, and the ATP-dependent hybridization of homologous single-stranded DNAs. It interacts with LexA causing its activation and leading to its autocatalytic cleavage. In Herbaspirillum seropedicae, this protein is Protein RecA.